We begin with the raw amino-acid sequence, 238 residues long: Aspartate/glutamate leucyltransferase (238 aa).

Belongs to the R-transferase family. Bpt subfamily.

It is found in the cytoplasm. The enzyme catalyses N-terminal L-glutamyl-[protein] + L-leucyl-tRNA(Leu) = N-terminal L-leucyl-L-glutamyl-[protein] + tRNA(Leu) + H(+). The catalysed reaction is N-terminal L-aspartyl-[protein] + L-leucyl-tRNA(Leu) = N-terminal L-leucyl-L-aspartyl-[protein] + tRNA(Leu) + H(+). Functions in the N-end rule pathway of protein degradation where it conjugates Leu from its aminoacyl-tRNA to the N-termini of proteins containing an N-terminal aspartate or glutamate. This is Aspartate/glutamate leucyltransferase from Shewanella sp. (strain MR-7).